The primary structure comprises 154 residues: Transcriptional repressor NrdR (154 aa).

A zinc finger spans residues 3-34 (CPFCGNVDTQVKDSRPAEDNVAIRRRRFCPAC). The region spanning 49 to 139 (LVVVKSSGRR…VYKNFQAADD (91 aa)) is the ATP-cone domain.

Belongs to the NrdR family. It depends on Zn(2+) as a cofactor.

Functionally, negatively regulates transcription of bacterial ribonucleotide reductase nrd genes and operons by binding to NrdR-boxes. This Paracoccus denitrificans (strain Pd 1222) protein is Transcriptional repressor NrdR.